The sequence spans 182 residues: Ribosome maturation factor RimM (182 aa).

Positions 103–182 (EDEFYWRELF…RIEVDWDPGF (80 aa)) constitute a PRC barrel domain.

This sequence belongs to the RimM family. Binds ribosomal protein uS19.

The protein localises to the cytoplasm. Functionally, an accessory protein needed during the final step in the assembly of 30S ribosomal subunit, possibly for assembly of the head region. Essential for efficient processing of 16S rRNA. May be needed both before and after RbfA during the maturation of 16S rRNA. It has affinity for free ribosomal 30S subunits but not for 70S ribosomes. The polypeptide is Ribosome maturation factor RimM (Vibrio parahaemolyticus serotype O3:K6 (strain RIMD 2210633)).